A 202-amino-acid polypeptide reads, in one-letter code: Odorant-binding protein 59a (202 aa).

Positions 1-20 (MKQLIFLLICLSCGTCSIYA) are cleaved as a signal peptide. Residues 43–53 (HRQDEDEDRGR) are compositionally biased toward basic and acidic residues. Positions 43–105 (HRQDEDEDRG…QSDGRNHTSN (63 aa)) are disordered. The segment covering 54-65 (GGQGRQGNGYEY) has biased composition (gly residues).

It belongs to the PBP/GOBP family. Expressed in non-neuronal cells in hygrosensitive sensilla in the second chamber of the sacculus of the antenna third segment (at protein level).

Its subcellular location is the secreted. Odorant-binding protein required for hygrotaxis behavior in humidity-detecting sensilla. This chain is Odorant-binding protein 59a, found in Drosophila melanogaster (Fruit fly).